A 70-amino-acid polypeptide reads, in one-letter code: Omega-conotoxin-like Bu1 (70 aa).

An N-terminal signal peptide occupies residues 1–22 (MKLTCVAIVAVLLLTACQLITA). A propeptide spanning residues 23 to 45 (EDSRGTQLHRALRKTTKLSVSTR) is cleaved from the precursor. Cystine bridges form between Cys46–Cys61, Cys53–Cys65, and Cys60–Cys70.

This sequence belongs to the conotoxin O1 superfamily. As to expression, expressed by the venom duct.

It localises to the secreted. In terms of biological role, omega-conotoxins act at presynaptic membranes, they bind and block voltage-gated calcium channels (Cav). The polypeptide is Omega-conotoxin-like Bu1 (Conus bullatus (Bubble cone)).